The primary structure comprises 412 residues: uncharacterized protein (412 aa).

7 repeat units span residues 112–116 (GSIRS), 117–121 (GSIRS), 122–126 (GSIRD), 127–131 (GSIRD), 132–136 (GSIRS), 137–141 (GNIRD), and 142–146 (GSVRS). Residues 112–146 (GSIRSGSIRSGSIRDGSIRDGSIRSGNIRDGSVRS) are 7 X 5 AA tandem repeats of G-[NS]-[IV]-R-[DNS]. A compositionally biased stretch (low complexity) spans 116-126 (SGSIRSGSIRD). Residues 116–208 (SGSIRSGSIR…YSEKSIKPST (93 aa)) form a disordered region. Basic and acidic residues predominate over residues 192 to 208 (NHYAESEYSEKSIKPST).

It belongs to the asfivirus B407L family.

This is an uncharacterized protein from Ornithodoros (relapsing fever ticks).